Here is a 113-residue protein sequence, read N- to C-terminus: Small ribosomal subunit protein uS17 (113 aa).

It belongs to the universal ribosomal protein uS17 family. In terms of assembly, part of the 30S ribosomal subunit.

In terms of biological role, one of the primary rRNA binding proteins, it binds specifically to the 5'-end of 16S ribosomal RNA. This Pyrococcus furiosus (strain ATCC 43587 / DSM 3638 / JCM 8422 / Vc1) protein is Small ribosomal subunit protein uS17.